The sequence spans 145 residues: 3-dehydroquinate dehydratase (145 aa).

The active-site Proton acceptor is the Tyr23. Substrate-binding residues include Asn75, His81, and Asp88. His101 serves as the catalytic Proton donor. Substrate contacts are provided by residues 102–103 (LS) and Arg112.

This sequence belongs to the type-II 3-dehydroquinase family. Homododecamer.

The catalysed reaction is 3-dehydroquinate = 3-dehydroshikimate + H2O. The protein operates within metabolic intermediate biosynthesis; chorismate biosynthesis; chorismate from D-erythrose 4-phosphate and phosphoenolpyruvate: step 3/7. In terms of biological role, catalyzes a trans-dehydration via an enolate intermediate. The sequence is that of 3-dehydroquinate dehydratase from Legionella pneumophila (strain Paris).